We begin with the raw amino-acid sequence, 384 residues long: Dihydrolipoyllysine-residue acetyltransferase component of pyruvate dehydrogenase complex (384 aa).

The Lipoyl-binding domain maps to 2 to 77; the sequence is ANEFKFTDVG…SIGQVMAVIG (76 aa). The residue at position 43 (Lys43) is an N6-lipoyllysine. Residue His356 is part of the active site.

It belongs to the 2-oxoacid dehydrogenase family. As to quaternary structure, forms a 24-polypeptide structural core with octahedral symmetry. Requires (R)-lipoate as cofactor.

It catalyses the reaction N(6)-[(R)-dihydrolipoyl]-L-lysyl-[protein] + acetyl-CoA = N(6)-[(R)-S(8)-acetyldihydrolipoyl]-L-lysyl-[protein] + CoA. In terms of biological role, the pyruvate dehydrogenase complex catalyzes the overall conversion of pyruvate to acetyl-CoA and CO(2). It contains multiple copies of three enzymatic components: pyruvate dehydrogenase (E1), dihydrolipoamide acetyltransferase (E2) and lipoamide dehydrogenase (E3). The sequence is that of Dihydrolipoyllysine-residue acetyltransferase component of pyruvate dehydrogenase complex (pdhC) from Mycoplasma genitalium (strain ATCC 33530 / DSM 19775 / NCTC 10195 / G37) (Mycoplasmoides genitalium).